Reading from the N-terminus, the 356-residue chain is Holliday junction branch migration complex subunit RuvB (356 aa).

Residues 4 to 191 (TDKLATEQRI…FGIVARLEFY (188 aa)) form a large ATPase domain (RuvB-L) region. ATP contacts are provided by residues L30, R31, G72, K75, T76, T77, 138–140 (EDY), R181, Y191, and R228. Residue T76 coordinates Mg(2+). The tract at residues 192–262 (DAEQLSRIVR…VADAALAMLD (71 aa)) is small ATPAse domain (RuvB-S). A head domain (RuvB-H) region spans residues 265 to 356 (PVGFDLMDRK…RGEWDTPDGK (92 aa)). R301, R320, and R325 together coordinate DNA.

It belongs to the RuvB family. In terms of assembly, homohexamer. Forms an RuvA(8)-RuvB(12)-Holliday junction (HJ) complex. HJ DNA is sandwiched between 2 RuvA tetramers; dsDNA enters through RuvA and exits via RuvB. An RuvB hexamer assembles on each DNA strand where it exits the tetramer. Each RuvB hexamer is contacted by two RuvA subunits (via domain III) on 2 adjacent RuvB subunits; this complex drives branch migration. In the full resolvosome a probable DNA-RuvA(4)-RuvB(12)-RuvC(2) complex forms which resolves the HJ.

The protein resides in the cytoplasm. The catalysed reaction is ATP + H2O = ADP + phosphate + H(+). In terms of biological role, the RuvA-RuvB-RuvC complex processes Holliday junction (HJ) DNA during genetic recombination and DNA repair, while the RuvA-RuvB complex plays an important role in the rescue of blocked DNA replication forks via replication fork reversal (RFR). RuvA specifically binds to HJ cruciform DNA, conferring on it an open structure. The RuvB hexamer acts as an ATP-dependent pump, pulling dsDNA into and through the RuvAB complex. RuvB forms 2 homohexamers on either side of HJ DNA bound by 1 or 2 RuvA tetramers; 4 subunits per hexamer contact DNA at a time. Coordinated motions by a converter formed by DNA-disengaged RuvB subunits stimulates ATP hydrolysis and nucleotide exchange. Immobilization of the converter enables RuvB to convert the ATP-contained energy into a lever motion, pulling 2 nucleotides of DNA out of the RuvA tetramer per ATP hydrolyzed, thus driving DNA branch migration. The RuvB motors rotate together with the DNA substrate, which together with the progressing nucleotide cycle form the mechanistic basis for DNA recombination by continuous HJ branch migration. Branch migration allows RuvC to scan DNA until it finds its consensus sequence, where it cleaves and resolves cruciform DNA. The protein is Holliday junction branch migration complex subunit RuvB of Burkholderia lata (strain ATCC 17760 / DSM 23089 / LMG 22485 / NCIMB 9086 / R18194 / 383).